The sequence spans 153 residues: UPF0311 protein RPA1785 (153 aa).

Belongs to the UPF0311 family.

The sequence is that of UPF0311 protein RPA1785 from Rhodopseudomonas palustris (strain ATCC BAA-98 / CGA009).